Consider the following 271-residue polypeptide: Putative pyruvate, phosphate dikinase regulatory protein 1 (271 aa).

Residue 156 to 163 (GVSRTSKT) coordinates ADP.

Belongs to the pyruvate, phosphate/water dikinase regulatory protein family. PDRP subfamily.

It carries out the reaction N(tele)-phospho-L-histidyl/L-threonyl-[pyruvate, phosphate dikinase] + ADP = N(tele)-phospho-L-histidyl/O-phospho-L-threonyl-[pyruvate, phosphate dikinase] + AMP + H(+). The catalysed reaction is N(tele)-phospho-L-histidyl/O-phospho-L-threonyl-[pyruvate, phosphate dikinase] + phosphate + H(+) = N(tele)-phospho-L-histidyl/L-threonyl-[pyruvate, phosphate dikinase] + diphosphate. Its function is as follows. Bifunctional serine/threonine kinase and phosphorylase involved in the regulation of the pyruvate, phosphate dikinase (PPDK) by catalyzing its phosphorylation/dephosphorylation. In Staphylococcus saprophyticus subsp. saprophyticus (strain ATCC 15305 / DSM 20229 / NCIMB 8711 / NCTC 7292 / S-41), this protein is Putative pyruvate, phosphate dikinase regulatory protein 1.